Here is a 131-residue protein sequence, read N- to C-terminus: Glutaredoxin arsenate reductase (131 aa).

Catalysis depends on nucleophile residues Cys-8 and Cys-80. 2 disulfides stabilise this stretch: Cys-8/Cys-80 and Cys-80/Cys-82.

It belongs to the low molecular weight phosphotyrosine protein phosphatase family. Homodimer.

It carries out the reaction O-phospho-L-tyrosyl-[protein] + H2O = L-tyrosyl-[protein] + phosphate. The catalysed reaction is [glutaredoxin]-dithiol + arsenate + glutathione + H(+) = glutathionyl-S-S-[glutaredoxin] + arsenite + H2O. Its function is as follows. Reduces arsenate [As(V)] to arsenite [As(III)] using glutathione and glutaredoxin as sources of reducing equivalents. GrxA is the most effective electron donor in vivo compared to other glutaredoxins. Constitutes the major arsenate reductase compared to ArsI1 and ArsI2. Also shows weak phosphatase activity toward p-nitrophenyl phosphate. The chain is Glutaredoxin arsenate reductase (arsC) from Synechocystis sp. (strain ATCC 27184 / PCC 6803 / Kazusa).